A 245-amino-acid chain; its full sequence is Biosynthetic peptidoglycan transglycosylase (245 aa).

A helical membrane pass occupies residues 19 to 39 (IVYAGAVFAAAWLATQLFYFV).

The protein belongs to the glycosyltransferase 51 family.

The protein resides in the cell inner membrane. The enzyme catalyses [GlcNAc-(1-&gt;4)-Mur2Ac(oyl-L-Ala-gamma-D-Glu-L-Lys-D-Ala-D-Ala)](n)-di-trans,octa-cis-undecaprenyl diphosphate + beta-D-GlcNAc-(1-&gt;4)-Mur2Ac(oyl-L-Ala-gamma-D-Glu-L-Lys-D-Ala-D-Ala)-di-trans,octa-cis-undecaprenyl diphosphate = [GlcNAc-(1-&gt;4)-Mur2Ac(oyl-L-Ala-gamma-D-Glu-L-Lys-D-Ala-D-Ala)](n+1)-di-trans,octa-cis-undecaprenyl diphosphate + di-trans,octa-cis-undecaprenyl diphosphate + H(+). It participates in cell wall biogenesis; peptidoglycan biosynthesis. In terms of biological role, peptidoglycan polymerase that catalyzes glycan chain elongation from lipid-linked precursors. The protein is Biosynthetic peptidoglycan transglycosylase of Burkholderia multivorans (strain ATCC 17616 / 249).